Here is a 447-residue protein sequence, read N- to C-terminus: Elongation factor 1-alpha (447 aa).

A tr-type G domain is found at 5-230; the sequence is KVHINIVVIG…DNINEPKRPS (226 aa). A G1 region spans residues 14–21; the sequence is GHVDSGKS. 14–21 is a GTP binding site; that stretch reads GHVDSGKS. K55 is modified (N6,N6-dimethyllysine). The segment at 70–74 is G2; it reads GITID. K79 carries the N6,N6,N6-trimethyllysine modification. The interval 91-94 is G3; that stretch reads DAPG. Residues 91–95 and 153–156 each bind GTP; these read DAPGH and NKMD. The G4 stretch occupies residues 153–156; sequence NKMD. K187 is subject to N6,N6,N6-trimethyllysine. Residues 194 to 196 are G5; sequence SGF. Position 261 is an N6-methyllysine (K261). E289 is modified (5-glutamyl glycerylphosphorylethanolamine). N6,N6,N6-trimethyllysine is present on K306. The residue at position 362 (E362) is a 5-glutamyl glycerylphosphorylethanolamine. N6,N6,N6-trimethyllysine is present on K396.

It belongs to the TRAFAC class translation factor GTPase superfamily. Classic translation factor GTPase family. EF-Tu/EF-1A subfamily.

Its subcellular location is the cytoplasm. This protein promotes the GTP-dependent binding of aminoacyl-tRNA to the A-site of ribosomes during protein biosynthesis. This is Elongation factor 1-alpha from Vicia faba (Broad bean).